Reading from the N-terminus, the 123-residue chain is MIQEQTMLNVADNSGARRVMCIKVLGGSHRRYAGVGDIIKITIKEAIPRGKVKKGDVLKAVVVRTRKGVRRPDGSVIRFDGNACVILNNNSEQPIGTRIFGPVTRELRTEKFMKIISLAPEVL.

Belongs to the universal ribosomal protein uL14 family. As to quaternary structure, part of the 50S ribosomal subunit. Forms a cluster with proteins L3 and L19. In the 70S ribosome, L14 and L19 interact and together make contacts with the 16S rRNA in bridges B5 and B8.

Its function is as follows. Binds to 23S rRNA. Forms part of two intersubunit bridges in the 70S ribosome. The sequence is that of Large ribosomal subunit protein uL14 from Erwinia tasmaniensis (strain DSM 17950 / CFBP 7177 / CIP 109463 / NCPPB 4357 / Et1/99).